The primary structure comprises 359 residues: Threonine dehydratase biosynthetic, chloroplastic (359 aa).

ACT-like domains follow at residues Ala-184 to His-256 and Ile-278 to Ser-349.

The protein belongs to the serine/threonine dehydratase family. As to quaternary structure, homotetramer. Requires pyridoxal 5'-phosphate as cofactor. Floral buds of untreated plants. After ABA treatment or mechanical wounding is mostly accumulated in leaves, to a lesser extent in stems, but not in roots. Expressed in anthers, carpel leaves, pith cells, sepals and petals. Not expressed in stomium, vascular bundles, epidermal cells or pollen mother cells.

It localises to the plastid. The protein resides in the chloroplast. The enzyme catalyses L-threonine = 2-oxobutanoate + NH4(+). It participates in amino-acid biosynthesis; L-isoleucine biosynthesis; 2-oxobutanoate from L-threonine: step 1/1. This chain is Threonine dehydratase biosynthetic, chloroplastic, found in Solanum tuberosum (Potato).